Here is a 953-residue protein sequence, read N- to C-terminus: Translation initiation factor IF-2 (953 aa).

Residues glycine 55–tyrosine 340 form a disordered region. Residues lysine 81 to alanine 93 are compositionally biased toward low complexity. Pro residues predominate over residues proline 110–lysine 119. 2 stretches are compositionally biased toward low complexity: residues serine 123–lysine 133 and lysine 143–proline 160. Residues proline 202 to glycine 219 show a composition bias toward gly residues. Low complexity predominate over residues glutamine 233 to glutamine 248. Over residues asparagine 280–glycine 323 the composition is skewed to gly residues. The segment covering arginine 327–lysine 336 has biased composition (basic residues). Residues lysine 449–aspartate 621 form the tr-type G domain. A G1 region spans residues glycine 458–threonine 465. Glycine 458–threonine 465 is a binding site for GTP. Residues glycine 483–glycine 487 are G2. Residues aspartate 508–glycine 511 are G3. GTP contacts are provided by residues aspartate 508–histidine 512 and asparagine 562–aspartate 565. The G4 stretch occupies residues asparagine 562–aspartate 565. Residues serine 598 to lysine 600 are G5.

It belongs to the TRAFAC class translation factor GTPase superfamily. Classic translation factor GTPase family. IF-2 subfamily.

It localises to the cytoplasm. Functionally, one of the essential components for the initiation of protein synthesis. Protects formylmethionyl-tRNA from spontaneous hydrolysis and promotes its binding to the 30S ribosomal subunits. Also involved in the hydrolysis of GTP during the formation of the 70S ribosomal complex. The chain is Translation initiation factor IF-2 from Corynebacterium diphtheriae (strain ATCC 700971 / NCTC 13129 / Biotype gravis).